The chain runs to 428 residues: AP-1 complex subunit mu (428 aa).

The residue at position 2 (A2) is an N-acetylalanine; partial. One can recognise an MHD domain in the interval 169–426 (KNEVFLDVVE…VCLSGDYQFR (258 aa)).

It belongs to the adaptor complexes medium subunit family. As to quaternary structure, adaptor protein complex 1 (AP-1) is a heterotetramer composed of two large adaptins (gamma-type subunit and beta-type subunit), a medium adaptin (mu-type subunit) and a small adaptin (sigma-type subunit).

Its subcellular location is the golgi apparatus. It localises to the trans-Golgi network. The protein resides in the cytoplasmic vesicle. The protein localises to the clathrin-coated vesicle membrane. In terms of biological role, subunit of clathrin-associated adaptor protein complex 1 that plays a role in protein sorting in the trans-Golgi network (TGN) and endosomes. The AP complexes mediate the recruitment of clathrin to membranes and the recognition of sorting signals within the cytosolic tails of transmembrane cargo molecules. Also involved in early steps of phagocytosis and macropinocytosis. This is AP-1 complex subunit mu (apm1) from Dictyostelium discoideum (Social amoeba).